The chain runs to 317 residues: Porphobilinogen deaminase (317 aa).

The residue at position 245 (Cys245) is an S-(dipyrrolylmethanemethyl)cysteine.

Belongs to the HMBS family. Monomer. Requires dipyrromethane as cofactor.

The catalysed reaction is 4 porphobilinogen + H2O = hydroxymethylbilane + 4 NH4(+). Its pathway is porphyrin-containing compound metabolism; protoporphyrin-IX biosynthesis; coproporphyrinogen-III from 5-aminolevulinate: step 2/4. It participates in porphyrin-containing compound metabolism; chlorophyll biosynthesis. Tetrapolymerization of the monopyrrole PBG into the hydroxymethylbilane pre-uroporphyrinogen in several discrete steps. This Prochlorococcus marinus (strain MIT 9303) protein is Porphobilinogen deaminase.